We begin with the raw amino-acid sequence, 772 residues long: Uracil catabolism protein 2 (772 aa).

Positions M1–F70 are disordered. The segment covering H39–E51 has biased composition (basic and acidic residues). Residues G59–T69 are compositionally biased toward basic residues. A DNA-binding region (zn(2)-C6 fungal-type) is located at residues C72 to C101.

This sequence belongs to the URC2 family.

It is found in the cytoplasm. Its subcellular location is the nucleus. Functionally, probable transcriptional activator involved in uracil catabolism. In Saccharomyces cerevisiae (strain ATCC 204508 / S288c) (Baker's yeast), this protein is Uracil catabolism protein 2 (URC2).